The chain runs to 239 residues: Small ribosomal subunit protein uS2 (239 aa).

This sequence belongs to the universal ribosomal protein uS2 family.

In Prochlorococcus marinus (strain MIT 9313), this protein is Small ribosomal subunit protein uS2.